The following is a 93-amino-acid chain: UPF0298 protein GWCH70_0997 (93 aa).

The protein belongs to the UPF0298 family.

It localises to the cytoplasm. This is UPF0298 protein GWCH70_0997 from Geobacillus sp. (strain WCH70).